The following is a 51-amino-acid chain: Large ribosomal subunit protein eL40 (51 aa).

Belongs to the eukaryotic ribosomal protein eL40 family.

In Thermofilum pendens (strain DSM 2475 / Hrk 5), this protein is Large ribosomal subunit protein eL40.